The primary structure comprises 76 residues: MKFALFSVLVLMLIATFVAADDCPRICTSDYTPVCGTPSGGRRSANRTFANQCGLDSHNCLNKGDTYDKLHDGECK.

The N-terminal stretch at methionine 1–aspartate 21 is a signal peptide. Residues aspartate 22–lysine 76 form the Kazal-like domain. 3 cysteine pairs are disulfide-bonded: cysteine 23-cysteine 60, cysteine 27-cysteine 53, and cysteine 35-cysteine 75.

As to expression, expressed by the salivary gland.

It is found in the secreted. Vasodilator protein that inhibits vasoconstriction of isolated rat femoral artery induced by phenylephrine. Since platelet aggregation and vasoconstriction are key hemostatic responses, particularly in small wounds, this protein likely participates in the antihemostatic responses during blood feeding. Blocks L-type calcium channels (Cav1/CACNA1) in left ventricular myocytes isolated from rat hearts. The protein is Vasotab-TY3 of Tabanus yao (Horsefly).